Here is a 365-residue protein sequence, read N- to C-terminus: DNA replication and repair protein RecF (365 aa).

G30–T37 is an ATP binding site.

It belongs to the RecF family.

It localises to the cytoplasm. Functionally, the RecF protein is involved in DNA metabolism; it is required for DNA replication and normal SOS inducibility. RecF binds preferentially to single-stranded, linear DNA. It also seems to bind ATP. This is DNA replication and repair protein RecF from Parabacteroides distasonis (strain ATCC 8503 / DSM 20701 / CIP 104284 / JCM 5825 / NCTC 11152).